The primary structure comprises 802 residues: Pyrophosphate-energized membrane proton pump 3 (802 aa).

Helical transmembrane passes span 41-61 (LNVR…FYMG), 66-86 (PIIV…VYLT), 118-138 (YGTI…IYLF), 160-180 (VAAF…GMWV), 206-226 (AGGF…AILY), and 246-266 (LPLL…FAQL). Residue lysine 273 participates in substrate binding. Residues aspartate 276, aspartate 280, and aspartate 306 each contribute to the Mg(2+) site. The next 5 helical transmembrane spans lie at 348–368 (FILF…IGIL), 386–406 (MVVL…TFGA), 421–441 (WLNF…FVWI), 468–491 (IIAG…VAII), and 511–531 (GGLF…AYVL). Residues aspartate 541 and asparagine 568 each contribute to the Mg(2+) site. Transmembrane regions (helical) follow at residues 577–597 (FAIG…MDEV), 615–635 (VFIG…WACA), 686–706 (GALA…LGYY), and 716–736 (VVAA…LFLN). 2 residues coordinate Mg(2+): aspartate 743 and aspartate 773. A substrate-binding site is contributed by lysine 776. The helical transmembrane segment at 782–802 (SIHVLIKMLATITLVMAPIFL) threads the bilayer.

It belongs to the H(+)-translocating pyrophosphatase (TC 3.A.10) family. K(+)-insensitive subfamily. In terms of assembly, monomer.

The protein resides in the golgi apparatus membrane. The catalysed reaction is diphosphate + H2O + H(+)(in) = 2 phosphate + 2 H(+)(out). This Arabidopsis thaliana (Mouse-ear cress) protein is Pyrophosphate-energized membrane proton pump 3 (AVPL2).